The following is a 141-amino-acid chain: Hemoglobin subunit alpha (141 aa).

In terms of domain architecture, Globin spans 1–141 (VLSAADKANV…VSTVLTSKYR (141 aa)). The residue at position 3 (S3) is a Phosphoserine. N6-succinyllysine occurs at positions 7 and 11. An N6-acetyllysine; alternate modification is found at K16. The residue at position 16 (K16) is an N6-succinyllysine; alternate. K40 is modified (N6-succinyllysine). S49 carries the phosphoserine modification. Residue H58 participates in O2 binding. Residue H87 participates in heme b binding. S102 bears the Phosphoserine mark. T108 is modified (phosphothreonine). Phosphoserine is present on S124. 2 positions are modified to phosphothreonine: T134 and T137. S138 bears the Phosphoserine mark.

This sequence belongs to the globin family. In terms of assembly, heterotetramer of two alpha chains and two beta chains. In terms of tissue distribution, red blood cells.

Involved in oxygen transport from the lung to the various peripheral tissues. Functionally, hemopressin acts as an antagonist peptide of the cannabinoid receptor CNR1. Hemopressin-binding efficiently blocks cannabinoid receptor CNR1 and subsequent signaling. This chain is Hemoglobin subunit alpha (HBA), found in Sus scrofa (Pig).